The primary structure comprises 317 residues: Aspartate carbamoyltransferase catalytic subunit (317 aa).

The carbamoyl phosphate site is built by Arg-65 and Thr-66. Residue Lys-93 coordinates L-aspartate. The carbamoyl phosphate site is built by Arg-115, His-145, and Gln-148. The L-aspartate site is built by Arg-178 and Arg-233. Positions 274 and 275 each coordinate carbamoyl phosphate.

It belongs to the aspartate/ornithine carbamoyltransferase superfamily. ATCase family. In terms of assembly, heterododecamer (2C3:3R2) of six catalytic PyrB chains organized as two trimers (C3), and six regulatory PyrI chains organized as three dimers (R2).

It carries out the reaction carbamoyl phosphate + L-aspartate = N-carbamoyl-L-aspartate + phosphate + H(+). It participates in pyrimidine metabolism; UMP biosynthesis via de novo pathway; (S)-dihydroorotate from bicarbonate: step 2/3. In terms of biological role, catalyzes the condensation of carbamoyl phosphate and aspartate to form carbamoyl aspartate and inorganic phosphate, the committed step in the de novo pyrimidine nucleotide biosynthesis pathway. In Bordetella bronchiseptica (strain ATCC BAA-588 / NCTC 13252 / RB50) (Alcaligenes bronchisepticus), this protein is Aspartate carbamoyltransferase catalytic subunit.